The chain runs to 61 residues: Beta-insect depressant toxin BaIT2 (61 aa).

The 61-residue stretch at 1 to 61 folds into the LCN-type CS-alpha/beta domain; sequence DGYIRRRDGC…TWKSETNTCG (61 aa). Disulfide bonds link Cys-10-Cys-60, Cys-14-Cys-35, Cys-21-Cys-42, and Cys-25-Cys-44.

This sequence belongs to the long (4 C-C) scorpion toxin superfamily. Sodium channel inhibitor family. Beta subfamily. In terms of tissue distribution, expressed by the venom gland.

The protein localises to the secreted. Functionally, depressant insect beta-toxins cause a transient contraction paralysis followed by a slow flaccid paralysis. They bind voltage-independently at site-4 of sodium channels (Nav) and shift the voltage of activation toward more negative potentials thereby affecting sodium channel activation and promoting spontaneous and repetitive firing. This toxin is active only on insects. The chain is Beta-insect depressant toxin BaIT2 from Buthacus arenicola (North African scorpion).